Consider the following 119-residue polypeptide: Holo-[acyl-carrier-protein] synthase (119 aa).

Aspartate 8 and glutamate 58 together coordinate Mg(2+).

The protein belongs to the P-Pant transferase superfamily. AcpS family. Mg(2+) is required as a cofactor.

The protein resides in the cytoplasm. The catalysed reaction is apo-[ACP] + CoA = holo-[ACP] + adenosine 3',5'-bisphosphate + H(+). Its function is as follows. Transfers the 4'-phosphopantetheine moiety from coenzyme A to a Ser of acyl-carrier-protein. This is Holo-[acyl-carrier-protein] synthase from Bacillus cereus (strain G9842).